The following is a 201-amino-acid chain: Probable nicotinate-nucleotide adenylyltransferase (201 aa).

This sequence belongs to the NadD family.

It catalyses the reaction nicotinate beta-D-ribonucleotide + ATP + H(+) = deamido-NAD(+) + diphosphate. The protein operates within cofactor biosynthesis; NAD(+) biosynthesis; deamido-NAD(+) from nicotinate D-ribonucleotide: step 1/1. In terms of biological role, catalyzes the reversible adenylation of nicotinate mononucleotide (NaMN) to nicotinic acid adenine dinucleotide (NaAD). The sequence is that of Probable nicotinate-nucleotide adenylyltransferase from Neisseria gonorrhoeae (strain ATCC 700825 / FA 1090).